We begin with the raw amino-acid sequence, 358 residues long: 4-hydroxy-3-methylbut-2-en-1-yl diphosphate synthase (flavodoxin) (358 aa).

Residues Cys264, Cys267, Cys299, and Glu306 each coordinate [4Fe-4S] cluster.

It belongs to the IspG family. The cofactor is [4Fe-4S] cluster.

It carries out the reaction (2E)-4-hydroxy-3-methylbut-2-enyl diphosphate + oxidized [flavodoxin] + H2O + 2 H(+) = 2-C-methyl-D-erythritol 2,4-cyclic diphosphate + reduced [flavodoxin]. The protein operates within isoprenoid biosynthesis; isopentenyl diphosphate biosynthesis via DXP pathway; isopentenyl diphosphate from 1-deoxy-D-xylulose 5-phosphate: step 5/6. Functionally, converts 2C-methyl-D-erythritol 2,4-cyclodiphosphate (ME-2,4cPP) into 1-hydroxy-2-methyl-2-(E)-butenyl 4-diphosphate. The sequence is that of 4-hydroxy-3-methylbut-2-en-1-yl diphosphate synthase (flavodoxin) from Helicobacter acinonychis (strain Sheeba).